We begin with the raw amino-acid sequence, 559 residues long: MSAPIHENERIKARSNCLRGTLRESLADTLTGAISPEDTQISKFHGFYQQDHRDRRQARPEQYLEPYFGFMLRAPLPGGVCTPAQWLAIDGMGRELGGGSLRLTTRQSFQYHGILKRDIASVIRGINAVMIDSIGGCGDVNRNVLCNPNPVESALHREVYDWAKRISEHLLPRTRAYHEIWLDGEQVGGGEDVEPIYGRTYLPRKFKTAVGVPPHNDVDVYANDLGFAAVADGSRLIGFNVSAGGTGRNTGIPATFPRLADVLGFVEPERTLAVAEAVVTTQRHFGDRLDRTQARLKYTIERMGLDAFRDEVERRAGIRFAPARPIGFTDQGDRTAWVRGQDGRWHLTLYIESGRLIDGPGQSSMQGLREIARIHQGDFRITPNQNLIVARVPEPGKSEIEALARKYGLLDKGIALRLNGMSCVALPTCPLAMAEAERYYPDFLAQVERLTRKHGLAEQEIVTRMTGCPNGCARPYLAELALVGKGPGRYNLMLGGNGRRYRLNRLYRENLDEAAILAEIDTLLGRYAACRQPGERFGDYLIRDGIVRPVVNPAEDFHE.

Positions 423, 429, 468, and 472 each coordinate [4Fe-4S] cluster. Cys472 is a siroheme binding site.

The protein belongs to the nitrite and sulfite reductase 4Fe-4S domain family. In terms of assembly, alpha(8)-beta(8). The alpha component is a flavoprotein, the beta component is a hemoprotein. Requires siroheme as cofactor. [4Fe-4S] cluster is required as a cofactor.

The enzyme catalyses hydrogen sulfide + 3 NADP(+) + 3 H2O = sulfite + 3 NADPH + 4 H(+). It functions in the pathway sulfur metabolism; hydrogen sulfide biosynthesis; hydrogen sulfide from sulfite (NADPH route): step 1/1. Functionally, component of the sulfite reductase complex that catalyzes the 6-electron reduction of sulfite to sulfide. This is one of several activities required for the biosynthesis of L-cysteine from sulfate. This chain is Sulfite reductase [NADPH] hemoprotein beta-component, found in Thiocapsa roseopersicina.